Reading from the N-terminus, the 30-residue chain is Cyclotide hyen-F (30 aa).

A cross-link (cyclopeptide (Gly-Asn)) is located at residues 1–30 (GLPCGESCVYIPCISTVLGCSCSNKVCYRN). 3 disulfide bridges follow: C4/C20, C8/C22, and C13/C27.

In terms of processing, this is a cyclic peptide. As to expression, detected in seeds (at protein level).

Probably participates in a plant defense mechanism. This Pigea enneasperma (Spade flower) protein is Cyclotide hyen-F.